Reading from the N-terminus, the 226-residue chain is Ribonuclease 3 (226 aa).

The RNase III domain maps to Thr-6 to Asn-128. Glu-41 contacts Mg(2+). Asp-45 is a catalytic residue. Mg(2+)-binding residues include Asn-114 and Glu-117. Glu-117 is an active-site residue. The region spanning Asp-155–Val-225 is the DRBM domain.

It belongs to the ribonuclease III family. As to quaternary structure, homodimer. Mg(2+) serves as cofactor.

The protein localises to the cytoplasm. It carries out the reaction Endonucleolytic cleavage to 5'-phosphomonoester.. In terms of biological role, digests double-stranded RNA. Involved in the processing of primary rRNA transcript to yield the immediate precursors to the large and small rRNAs (23S and 16S). Processes some mRNAs, and tRNAs when they are encoded in the rRNA operon. Processes pre-crRNA and tracrRNA of type II CRISPR loci if present in the organism. The chain is Ribonuclease 3 from Buchnera aphidicola subsp. Acyrthosiphon pisum (strain 5A).